Here is a 98-residue protein sequence, read N- to C-terminus: MQSAESGLLILPPNLMQRRVLKIKRILSYSRDTKVSHKVVLAYFRKHYWLIANGFCPYCHNHYRTFGILANHIMRSHTLEVAEDYFKLREKIKERGRK.

The C2H2-type zinc finger occupies 54–77; the sequence is GFCPYCHNHYRTFGILANHIMRSH.

This chain is Putative zinc finger protein ORF98b, found in Acidianus convivator (ATV).